Here is a 256-residue protein sequence, read N- to C-terminus: HTH-type transcriptional regulator PrtR (256 aa).

In terms of domain architecture, HTH cro/C1-type spans 16 to 69 (LKQAMAMRNLKQETLAEAAGVSQNTIHKLTSGKAQSTRKLIEIAAALGVSPVWL). The segment at residues 27–46 (QETLAEAAGVSQNTIHKLTS) is a DNA-binding region (H-T-H motif).

Represses the promoter activity of the prtN gene. The sequence is that of HTH-type transcriptional regulator PrtR (prtR) from Pseudomonas aeruginosa (strain ATCC 15692 / DSM 22644 / CIP 104116 / JCM 14847 / LMG 12228 / 1C / PRS 101 / PAO1).